The sequence spans 248 residues: Small ribosomal subunit protein uS2 (248 aa).

It belongs to the universal ribosomal protein uS2 family.

In Dechloromonas aromatica (strain RCB), this protein is Small ribosomal subunit protein uS2.